The following is a 406-amino-acid chain: UPF0754 membrane protein Cyan7425_4067 (406 aa).

A helical membrane pass occupies residues 381-401 (IVTLGGVLGLLIGIAQSVLLL).

This sequence belongs to the UPF0754 family.

Its subcellular location is the cell inner membrane. The chain is UPF0754 membrane protein Cyan7425_4067 from Cyanothece sp. (strain PCC 7425 / ATCC 29141).